Reading from the N-terminus, the 105-residue chain is MSNMKITNRFMLVATFIACVFISSMNMTVGKVIGYPGLKPDLPCDHHRYPSACAPSEQPVNPYRRGCSKIHRCRRDSPPAPISRKMLIRGQLIYNNAYNAYIQYP.

The N-terminal stretch at 1–30 (MSNMKITNRFMLVATFIACVFISSMNMTVG) is a signal peptide. Cystine bridges form between Cys-44–Cys-53 and Cys-67–Cys-73.

It belongs to the plant rapid alkalinization factor (RALF) family. As to expression, expressed in seeds and rosettes.

It localises to the secreted. Functionally, cell signaling peptide that may regulate plant stress, growth, and development. Mediates a rapid alkalinization of extracellular space by mediating a transient increase in the cytoplasmic Ca(2+) concentration leading to a calcium-dependent signaling events through a cell surface receptor and a concomitant activation of some intracellular mitogen-activated protein kinases. The sequence is that of Protein RALF-like 21 (RALFL21) from Arabidopsis thaliana (Mouse-ear cress).